Here is a 465-residue protein sequence, read N- to C-terminus: Poly(A) polymerase I (465 aa).

Residues Asp80, Asp82, and Asp162 contribute to the active site. Residues 430–465 form a disordered region; the sequence is APPEQKGMLNELDDDPAPRRRRSRPRKRAPRREGTV. Residues 448–459 show a composition bias toward basic residues; it reads RRRRSRPRKRAP.

It belongs to the tRNA nucleotidyltransferase/poly(A) polymerase family.

It carries out the reaction RNA(n) + ATP = RNA(n)-3'-adenine ribonucleotide + diphosphate. Adds poly(A) tail to the 3' end of many RNAs, which usually targets these RNAs for decay. Plays a significant role in the global control of gene expression, through influencing the rate of transcript degradation, and in the general RNA quality control. The protein is Poly(A) polymerase I of Salmonella typhi.